We begin with the raw amino-acid sequence, 405 residues long: Argininosuccinate synthase (405 aa).

Residues 10-18 (AYSGGLDTS) and A37 each bind ATP. Y88 and S93 together coordinate L-citrulline. G118 lines the ATP pocket. L-aspartate-binding residues include T120, N124, and D125. N124 contributes to the L-citrulline binding site. Residues R128, S179, S188, E264, and Y276 each coordinate L-citrulline.

Belongs to the argininosuccinate synthase family. Type 1 subfamily. Homotetramer.

Its subcellular location is the cytoplasm. It carries out the reaction L-citrulline + L-aspartate + ATP = 2-(N(omega)-L-arginino)succinate + AMP + diphosphate + H(+). It functions in the pathway amino-acid biosynthesis; L-arginine biosynthesis; L-arginine from L-ornithine and carbamoyl phosphate: step 2/3. This is Argininosuccinate synthase from Stutzerimonas stutzeri (strain A1501) (Pseudomonas stutzeri).